The primary structure comprises 259 residues: uncharacterized protein (259 aa).

The region spanning 1–159 (MIEQFFRPDS…TEIIIKDPYR (159 aa)) is the FAD-binding PCMH-type domain.

This is an uncharacterized protein from Escherichia coli O157:H7.